Here is a 315-residue protein sequence, read N- to C-terminus: MSQNKPAVRTFQDLILALQNYWAEQGCVVLQPYDMEVGAGTFHTATFLRAVGPETWNAAYVQPSRRPTDGRYGENPNRLQHYYQFQVVLKPNPENFQELYLGSLKAIGLDPEVHDIRFVEDNWESPTLGAWGLGWEIWLNGMEVTQFTYFQQVGGIECYPVTGEITYGLERLAMYLQGVDSVYDLIWTDGPFGTVTYGDVFHQNEVEQSTYNFEHANVEKLFELFDFYESEANRLIELELPLPTYEMVLKASHTFNLLDARRAISVTARQQYILRVRTLARAVAQSYLQARAKLGFPMATPELRDEVLAKLEAQA.

The protein belongs to the class-II aminoacyl-tRNA synthetase family. As to quaternary structure, tetramer of two alpha and two beta subunits.

It localises to the cytoplasm. The enzyme catalyses tRNA(Gly) + glycine + ATP = glycyl-tRNA(Gly) + AMP + diphosphate. The protein is Glycine--tRNA ligase alpha subunit of Ectopseudomonas mendocina (strain ymp) (Pseudomonas mendocina).